A 374-amino-acid polypeptide reads, in one-letter code: Peptide chain release factor 2 (374 aa).

Residue Q256 is modified to N5-methylglutamine.

This sequence belongs to the prokaryotic/mitochondrial release factor family. Methylated by PrmC. Methylation increases the termination efficiency of RF2.

It is found in the cytoplasm. Functionally, peptide chain release factor 2 directs the termination of translation in response to the peptide chain termination codons UGA and UAA. The polypeptide is Peptide chain release factor 2 (Mycobacterium leprae (strain Br4923)).